The primary structure comprises 331 residues: Adenosine deaminase (331 aa).

Histidine 12 and histidine 14 together coordinate Zn(2+). Substrate-binding residues include histidine 14, aspartate 16, and glycine 170. A Zn(2+)-binding site is contributed by histidine 197. Glutamate 200 (proton donor) is an active-site residue. Residue aspartate 278 coordinates Zn(2+).

Belongs to the metallo-dependent hydrolases superfamily. Adenosine and AMP deaminases family. Adenosine deaminase subfamily. Requires Zn(2+) as cofactor.

The catalysed reaction is adenosine + H2O + H(+) = inosine + NH4(+). It carries out the reaction 2'-deoxyadenosine + H2O + H(+) = 2'-deoxyinosine + NH4(+). In terms of biological role, catalyzes the hydrolytic deamination of adenosine and 2-deoxyadenosine. The protein is Adenosine deaminase of Clostridium botulinum (strain 657 / Type Ba4).